The primary structure comprises 363 residues: Protein disulfide-isomerase 1 (363 aa).

Positions 1 to 20 (MKILLFVTLIALAFVALCSA) are cleaved as a signal peptide. Thioredoxin domains are found at residues 21-132 (EGNV…NHAK) and 133-285 (TNVK…AAAE). Residues Cys51, Cys54, Cys172, and Cys175 each act as nucleophile in the active site. Cystine bridges form between Cys51–Cys54 and Cys172–Cys175.

This sequence belongs to the protein disulfide isomerase family.

The protein localises to the endoplasmic reticulum lumen. It carries out the reaction Catalyzes the rearrangement of -S-S- bonds in proteins.. Its function is as follows. Participates in the folding of proteins containing disulfide bonds, may be involved in glycosylation, prolyl hydroxylation and triglyceride transfer. The sequence is that of Protein disulfide-isomerase 1 (pdi1) from Dictyostelium discoideum (Social amoeba).